The sequence spans 199 residues: FMN-dependent NADH:quinone oxidoreductase 2 (199 aa).

FMN is bound by residues S10, 16 to 18, and 96 to 99; these read SVS and MYNF.

This sequence belongs to the azoreductase type 1 family. Homodimer. FMN is required as a cofactor.

It carries out the reaction 2 a quinone + NADH + H(+) = 2 a 1,4-benzosemiquinone + NAD(+). The enzyme catalyses N,N-dimethyl-1,4-phenylenediamine + anthranilate + 2 NAD(+) = 2-(4-dimethylaminophenyl)diazenylbenzoate + 2 NADH + 2 H(+). In terms of biological role, quinone reductase that provides resistance to thiol-specific stress caused by electrophilic quinones. Functionally, also exhibits azoreductase activity. Catalyzes the reductive cleavage of the azo bond in aromatic azo compounds to the corresponding amines. This chain is FMN-dependent NADH:quinone oxidoreductase 2, found in Pseudomonas putida (strain ATCC 47054 / DSM 6125 / CFBP 8728 / NCIMB 11950 / KT2440).